The chain runs to 144 residues: MNLSNLRAPRKANEKKKRVGRGMGSGMGKTSARGHKGQRSRSGSRMMRGFEGGQMPLHRRLPKRGFTNIFRVEYAVVNLDRLAELGLTEITPEVLIKHKLAGKNDKIKVLGNGEIKGAVTVRAHKFSKTAEEKIAKAGGKAEVL.

Residues 1-58 (MNLSNLRAPRKANEKKKRVGRGMGSGMGKTSARGHKGQRSRSGSRMMRGFEGGQMPLH) are disordered. Residues 8 to 20 (APRKANEKKKRVG) show a composition bias toward basic residues. A compositionally biased stretch (low complexity) spans 40–49 (SRSGSRMMRG).

This sequence belongs to the universal ribosomal protein uL15 family. In terms of assembly, part of the 50S ribosomal subunit.

Binds to the 23S rRNA. This Koribacter versatilis (strain Ellin345) protein is Large ribosomal subunit protein uL15.